A 198-amino-acid chain; its full sequence is ATP-dependent Clp protease proteolytic subunit (198 aa).

Catalysis depends on serine 98, which acts as the Nucleophile. Residue histidine 123 is part of the active site.

The protein belongs to the peptidase S14 family. Fourteen ClpP subunits assemble into 2 heptameric rings which stack back to back to give a disk-like structure with a central cavity, resembling the structure of eukaryotic proteasomes.

The protein localises to the cytoplasm. The catalysed reaction is Hydrolysis of proteins to small peptides in the presence of ATP and magnesium. alpha-casein is the usual test substrate. In the absence of ATP, only oligopeptides shorter than five residues are hydrolyzed (such as succinyl-Leu-Tyr-|-NHMec, and Leu-Tyr-Leu-|-Tyr-Trp, in which cleavage of the -Tyr-|-Leu- and -Tyr-|-Trp bonds also occurs).. Its function is as follows. Cleaves peptides in various proteins in a process that requires ATP hydrolysis. Has a chymotrypsin-like activity. Plays a major role in the degradation of misfolded proteins. In Ehrlichia ruminantium (strain Gardel), this protein is ATP-dependent Clp protease proteolytic subunit.